A 390-amino-acid polypeptide reads, in one-letter code: Large ribosomal subunit protein mL44 (390 aa).

The transit peptide at 1 to 59 (MGIVLKRAIAAGMKPFPNSTWHWSRTIRPFSQHLSSTCFLQQSSRFTSKRYLHLSTLTQ) directs the protein to the mitochondrion. One can recognise an RNase III domain in the interval 139–205 (AFVNTVPTNK…LAHIAKYWGI (67 aa)). The 71-residue stretch at 302-372 (QPTRELAMLC…ATDALMKWYC (71 aa)) folds into the DRBM domain.

The protein belongs to the ribonuclease III family. Mitochondrion-specific ribosomal protein mL44 subfamily. Component of the mitochondrial large ribosomal subunit (mt-LSU). Mature yeast 74S mitochondrial ribosomes consist of a small (37S) and a large (54S) subunit. The 37S small subunit contains a 15S ribosomal RNA (15S mt-rRNA) and 34 different proteins. The 54S large subunit contains a 21S rRNA (21S mt-rRNA) and 46 different proteins. mL44 forms a heterodimer with mL57 and stabilizes rRNA expansion segments 1/2 at a membrane-facing protuberance close to the point of attachment of the ribosome to the translocon in the membrane.

Its subcellular location is the mitochondrion. Component of the mitochondrial ribosome (mitoribosome), a dedicated translation machinery responsible for the synthesis of mitochondrial genome-encoded proteins, including at least some of the essential transmembrane subunits of the mitochondrial respiratory chain. The mitoribosomes are attached to the mitochondrial inner membrane and translation products are cotranslationally integrated into the membrane. The sequence is that of Large ribosomal subunit protein mL44 (MRPL3) from Saccharomyces cerevisiae (strain ATCC 204508 / S288c) (Baker's yeast).